Here is a 123-residue protein sequence, read N- to C-terminus: MKIVLVFVCTLYLAQATYLSEQDVNEVSEFLEALDQANEAASEMVEAAETEEARDWECLPLHSSCDNDCVCCKNHHCHCPYSNVSKLEKWLPEWAKIPDALKRCSCQRNDKDGKINTCDKYKN.

A signal peptide spans 1–16; that stretch reads MKIVLVFVCTLYLAQA. Residues 17 to 54 constitute a propeptide that is removed on maturation; the sequence is TYLSEQDVNEVSEFLEALDQANEAASEMVEAAETEEAR. Residues 55–122 enclose the Oxytoxin-type inhibitor cystine knot (ICK) domain; sequence DWECLPLHSS…GKINTCDKYK (68 aa). Cystine bridges form between cysteine 58–cysteine 72, cysteine 65–cysteine 77, cysteine 69–cysteine 118, cysteine 71–cysteine 106, and cysteine 79–cysteine 104.

Belongs to the spiderine family. Spiderine subfamily. Post-translationally, mass spectrometry data suggest a carboxylated free C-terminal residue. In terms of tissue distribution, expressed by the venom gland.

It localises to the secreted. Weak blocker of vertebrate P/Q-, N- and L-type voltage-gated calcium channels (Cav1 and Cav2). Is both paralytic and lethal when injected into lepidopteran larvae. Is not toxic to mice. In Oxyopes takobius (Lynx spider), this protein is Omega-oxotoxin-Ot1a.